The primary structure comprises 344 residues: GTP 3',8-cyclase (344 aa).

The 227-residue stretch at 19–245 folds into the Radical SAM core domain; sequence PFGRAVTYLR…DIPYRTGGPA (227 aa). Residue Arg28 coordinates GTP. Cys35 and Cys39 together coordinate [4Fe-4S] cluster. Tyr41 contributes to the S-adenosyl-L-methionine binding site. Residue Cys42 coordinates [4Fe-4S] cluster. Arg77 is a binding site for GTP. Position 81 (Gly81) interacts with S-adenosyl-L-methionine. Residue Thr111 participates in GTP binding. Ser135 provides a ligand contact to S-adenosyl-L-methionine. Lys171 is a GTP binding site. Residue Met205 participates in S-adenosyl-L-methionine binding. Residues Cys268 and Cys271 each coordinate [4Fe-4S] cluster. GTP is bound at residue 273–275; the sequence is RVR. Cys285 contacts [4Fe-4S] cluster.

Belongs to the radical SAM superfamily. MoaA family. In terms of assembly, monomer and homodimer. The cofactor is [4Fe-4S] cluster.

The catalysed reaction is GTP + AH2 + S-adenosyl-L-methionine = (8S)-3',8-cyclo-7,8-dihydroguanosine 5'-triphosphate + 5'-deoxyadenosine + L-methionine + A + H(+). It participates in cofactor biosynthesis; molybdopterin biosynthesis. In terms of biological role, catalyzes the cyclization of GTP to (8S)-3',8-cyclo-7,8-dihydroguanosine 5'-triphosphate. The chain is GTP 3',8-cyclase from Brucella abortus (strain S19).